A 265-amino-acid polypeptide reads, in one-letter code: Polyglutamine-binding protein 1 (265 aa).

One can recognise a WW domain in the interval 46–80 (EGLPPSWYKVFDPSCGLPYYWNADTDLVSWLSPHD). At Ser-94 the chain carries Phosphoserine. The interval 94 to 265 (SSNADAEEKL…AEASRTKQQD (172 aa)) is disordered. Residues 99-175 (AEEKLDRSHD…DKADREEGKE (77 aa)) show a composition bias toward basic and acidic residues. Tandem repeats lie at residues 104 to 110 (DRSHDKS), 111 to 117 (DRGHDKS), 118 to 124 (DRSHEKL), 125 to 131 (DRGHDKS), 132 to 138 (DRGHDKS), 139 to 140 (DR), 141 to 142 (DR), 143 to 144 (ER), 150 to 151 (DR), 152 to 153 (ER), 154 to 155 (ER), 156 to 157 (DR), 158 to 159 (ER), 160 to 161 (DR), and 162 to 163 (DR). A 5 X 7 AA approximate tandem repeats of D-R-[SG]-H-D-K-S region spans residues 104 to 138 (DRSHDKSDRGHDKSDRSHEKLDRGHDKSDRGHDKS). Residues 139-144 (DRDRER) are 3 X 2 AA tandem repeats of [DE]-R. The segment at 150-163 (DRERERDRERDRDR) is 7 X 2 AA tandem repeats of [DE]-R. Residues 245–255 (YPSPGAVLRAN) are important for interaction with TXNL4A. Ser-247 is subject to Phosphoserine.

In terms of assembly, interacts with POU3F2/Brn-2, ATXN1, TXNL4A, HTT and AR. Interaction with ATXN1 correlates positively with the length of the polyglutamine tract. Interacts with RNA polymerase II large subunit in a phosphorylation-dependent manner. Forms a ternary complex with ATXN1 mutant and phosphorylated RNA polymerase II. Interacts (via C-terminus) with TXNL4A and CD2BP2. Interacts (via WW domain) with ATN1 and SF3B1, and may interact with additional splice factors. Interacts (via WW domain) with WBP11; Leading to reduce interaction between PQBP1 and TXNL4A. Interacts with CAPRIN1. Interacts with DDX1. Interacts with SFPQ. Interacts with KHSRP.

The protein localises to the nucleus. The protein resides in the nucleus speckle. It is found in the cytoplasmic granule. In terms of biological role, intrinsically disordered protein that acts as a scaffold, and which is involved in different processes, such as pre-mRNA splicing, transcription regulation, innate immunity and neuron development. Interacts with splicing-related factors via the intrinsically disordered region and regulates alternative splicing of target pre-mRNA species. May suppress the ability of POU3F2 to transactivate the DRD1 gene in a POU3F2 dependent manner. Can activate transcription directly or via association with the transcription machinery. May be involved in ATXN1 mutant-induced cell death. The interaction with ATXN1 mutant reduces levels of phosphorylated RNA polymerase II large subunit. Involved in the assembly of cytoplasmic stress granule, possibly by participating in the transport of neuronal RNA granules. Also acts as an innate immune sensor of infection by retroviruses, by detecting the presence of reverse-transcribed DNA in the cytosol. Directly binds retroviral reverse-transcribed DNA in the cytosol and interacts with CGAS, leading to activate the cGAS-STING signaling pathway, triggering type-I interferon production. The chain is Polyglutamine-binding protein 1 (PQBP1) from Gorilla gorilla gorilla (Western lowland gorilla).